A 65-amino-acid polypeptide reads, in one-letter code: Photosystem II reaction center protein J (65 aa).

Over residues 1 to 18 the composition is skewed to basic and acidic residues; sequence MSSKLKGPDGRLPDRLPD. Positions 1–21 are disordered; the sequence is MSSKLKGPDGRLPDRLPDGRP. The helical transmembrane segment at 36 to 56 threads the bilayer; that stretch reads LWLVATAGGIAVIFVLGIFFY.

The protein belongs to the PsbJ family. PSII is composed of 1 copy each of membrane proteins PsbA, PsbB, PsbC, PsbD, PsbE, PsbF, PsbH, PsbI, PsbJ, PsbK, PsbL, PsbM, PsbT, PsbX, PsbY, Psb30/Ycf12, peripheral proteins PsbO, CyanoQ (PsbQ), PsbU, PsbV and a large number of cofactors. It forms dimeric complexes.

The protein localises to the cellular thylakoid membrane. Functionally, one of the components of the core complex of photosystem II (PSII). PSII is a light-driven water:plastoquinone oxidoreductase that uses light energy to abstract electrons from H(2)O, generating O(2) and a proton gradient subsequently used for ATP formation. It consists of a core antenna complex that captures photons, and an electron transfer chain that converts photonic excitation into a charge separation. The polypeptide is Photosystem II reaction center protein J (Prochlorococcus marinus (strain SARG / CCMP1375 / SS120)).